We begin with the raw amino-acid sequence, 851 residues long: Probable disease resistance protein At1g15890 (851 aa).

The 303-residue stretch at 139–441 folds into the NB-ARC domain; sequence AEKIPAPKVE…CEGFIDGNED (303 aa). Residue 181–188 coordinates ATP; the sequence is GMGGVGKT. 5 LRR repeats span residues 514–535, 536–557, 560–582, 584–605, and 607–629; these read SLRR…SNSP, NLST…FFRF, ALVV…ISKL, SLQY…FKEL, and KLIH…ATSL.

This sequence belongs to the disease resistance NB-LRR family.

In terms of biological role, probable disease resistance protein. This chain is Probable disease resistance protein At1g15890, found in Arabidopsis thaliana (Mouse-ear cress).